The following is a 632-amino-acid chain: Signal-transduction and transcriptional-control protein (632 aa).

Residues 197–270 form the PAS domain; sequence TYQYLNKITD…GQSYEDEEIM (74 aa). The Sigma-54 factor interaction domain occupies 324 to 554; sequence IIGQSEAMKR…LENCIENIVN (231 aa). Residues 352–359 and 416–425 contribute to the ATP site; these read GESGTGKE and ANEGTLFLDE. A DNA-binding region (H-T-H motif) is located at residues 606 to 625; the sequence is ISKACRILGINRSTLYIKIK.

In Clostridium beijerinckii (Clostridium MP), this protein is Signal-transduction and transcriptional-control protein (stc).